Here is a 194-residue protein sequence, read N- to C-terminus: Fe/S biogenesis protein NfuA (194 aa).

2 residues coordinate [4Fe-4S] cluster: cysteine 152 and cysteine 155.

This sequence belongs to the NfuA family. Homodimer. Requires [4Fe-4S] cluster as cofactor.

Its function is as follows. Involved in iron-sulfur cluster biogenesis. Binds a 4Fe-4S cluster, can transfer this cluster to apoproteins, and thereby intervenes in the maturation of Fe/S proteins. Could also act as a scaffold/chaperone for damaged Fe/S proteins. The sequence is that of Fe/S biogenesis protein NfuA from Ectopseudomonas mendocina (strain ymp) (Pseudomonas mendocina).